The following is a 208-amino-acid chain: Adapter protein MecA (208 aa).

It belongs to the MecA family. As to quaternary structure, homodimer.

Functionally, enables the recognition and targeting of unfolded and aggregated proteins to the ClpC protease or to other proteins involved in proteolysis. This Exiguobacterium sibiricum (strain DSM 17290 / CCUG 55495 / CIP 109462 / JCM 13490 / 255-15) protein is Adapter protein MecA.